The primary structure comprises 282 residues: Biotin synthase (282 aa).

The 228-residue stretch at 1-228 (MQEIFLCSIS…NARLMVAGGR (228 aa)) folds into the Radical SAM core domain. Residues C17, C21, and C24 each contribute to the [4Fe-4S] cluster site. Residues C61, C96, C154, and R221 each contribute to the [2Fe-2S] cluster site.

It belongs to the radical SAM superfamily. Biotin synthase family. In terms of assembly, homodimer. [4Fe-4S] cluster serves as cofactor. The cofactor is [2Fe-2S] cluster.

The catalysed reaction is (4R,5S)-dethiobiotin + (sulfur carrier)-SH + 2 reduced [2Fe-2S]-[ferredoxin] + 2 S-adenosyl-L-methionine = (sulfur carrier)-H + biotin + 2 5'-deoxyadenosine + 2 L-methionine + 2 oxidized [2Fe-2S]-[ferredoxin]. It functions in the pathway cofactor biosynthesis; biotin biosynthesis; biotin from 7,8-diaminononanoate: step 2/2. Catalyzes the conversion of dethiobiotin (DTB) to biotin by the insertion of a sulfur atom into dethiobiotin via a radical-based mechanism. The chain is Biotin synthase from Helicobacter pylori (strain J99 / ATCC 700824) (Campylobacter pylori J99).